Reading from the N-terminus, the 485-residue chain is N-succinylglutamate 5-semialdehyde dehydrogenase 2 (485 aa).

221–226 (GSAAAG) serves as a coordination point for NAD(+). Catalysis depends on residues E244 and C279.

It belongs to the aldehyde dehydrogenase family. AstD subfamily.

The catalysed reaction is N-succinyl-L-glutamate 5-semialdehyde + NAD(+) + H2O = N-succinyl-L-glutamate + NADH + 2 H(+). It participates in amino-acid degradation; L-arginine degradation via AST pathway; L-glutamate and succinate from L-arginine: step 4/5. Catalyzes the NAD-dependent reduction of succinylglutamate semialdehyde into succinylglutamate. This Caulobacter vibrioides (strain ATCC 19089 / CIP 103742 / CB 15) (Caulobacter crescentus) protein is N-succinylglutamate 5-semialdehyde dehydrogenase 2.